The chain runs to 113 residues: Large ribosomal subunit protein uL22 (113 aa).

This sequence belongs to the universal ribosomal protein uL22 family. As to quaternary structure, part of the 50S ribosomal subunit.

Functionally, this protein binds specifically to 23S rRNA; its binding is stimulated by other ribosomal proteins, e.g. L4, L17, and L20. It is important during the early stages of 50S assembly. It makes multiple contacts with different domains of the 23S rRNA in the assembled 50S subunit and ribosome. In terms of biological role, the globular domain of the protein is located near the polypeptide exit tunnel on the outside of the subunit, while an extended beta-hairpin is found that lines the wall of the exit tunnel in the center of the 70S ribosome. This is Large ribosomal subunit protein uL22 from Geobacillus kaustophilus (strain HTA426).